The following is a 718-amino-acid chain: Mitochondrial potassium channel ATP-binding subunit (718 aa).

The N-terminal 25 residues, 1–25, are a transit peptide targeting the mitochondrion; sequence MLVHLFRVGIRGGPFPGRLLPPLRF. The next 3 helical transmembrane spans lie at 128–148, 179–199, and 279–299; these read LLVL…NVQI, THLL…LVLL, and LLLM…GSGL. Residues 133 to 420 form the ABC transmembrane type-1 domain; sequence VAVVLALGAA…LSVLFGQVVR (288 aa). An ABC transporter domain is found at 455–692; sequence VTFQNVCFSY…GGLYAELIRR (238 aa). Residue 490–497 coordinates ATP; that stretch reads GQSGGGKT. A disordered region spans residues 697 to 718; sequence APRTAAPLPKKPEGPRNHQHKS.

This sequence belongs to the ABC transporter superfamily. ABCB family. Multidrug resistance exporter (TC 3.A.1.201) subfamily. In terms of assembly, the mitochondrial potassium channel (mitoK(ATP)) is composed of 4 subunits of CCDC51/MITOK and 4 subunits of ABCB8/MITOSUR. Physically interacts with PAAT. Interacts with Neuropilin-1 (NRP1) in mitochondria.

The protein resides in the mitochondrion inner membrane. Its activity is regulated as follows. Channel activity inhibited by ATP via ABCB8/MITOSUR subunit. ATP-binding subunit of the mitochondrial ATP-gated potassium channel (mitoK(ATP)). Together with pore-forming subunit CCDC51/MITOK of the mitoK(ATP) channel, mediates ATP-dependent potassium currents across the mitochondrial inner membrane. An increase in ATP intracellular levels closes the channel, inhibiting K(+) transport, whereas a decrease in ATP levels enhances K(+) uptake in the mitochondrial matrix. Plays a role in mitochondrial iron transport. Required for maintenance of normal cardiac function, possibly by influencing mitochondrial iron export and regulating the maturation of cytosolic iron sulfur cluster-containing enzymes. This is Mitochondrial potassium channel ATP-binding subunit (ABCB8) from Pongo abelii (Sumatran orangutan).